Consider the following 283-residue polypeptide: Putative S-adenosyl-L-methionine-dependent methyltransferase SAV_474/SAV474 (283 aa).

Residues D121 and 150–151 (DL) each bind S-adenosyl-L-methionine. Residues 258–283 (AAYGRPISTPPQREERPGGLISAVRR) form a disordered region.

It belongs to the UPF0677 family.

Functionally, exhibits S-adenosyl-L-methionine-dependent methyltransferase activity. The sequence is that of Putative S-adenosyl-L-methionine-dependent methyltransferase SAV_474/SAV474 from Streptomyces avermitilis (strain ATCC 31267 / DSM 46492 / JCM 5070 / NBRC 14893 / NCIMB 12804 / NRRL 8165 / MA-4680).